The chain runs to 809 residues: LPS-assembly protein LptD (809 aa).

An N-terminal signal peptide occupies residues 1–22 (MRRALRLLPLPLSIAICLPAMA).

Belongs to the LptD family. As to quaternary structure, component of the lipopolysaccharide transport and assembly complex. Interacts with LptE and LptA.

It is found in the cell outer membrane. In terms of biological role, together with LptE, is involved in the assembly of lipopolysaccharide (LPS) at the surface of the outer membrane. In Xanthomonas campestris pv. campestris (strain 8004), this protein is LPS-assembly protein LptD.